A 326-amino-acid chain; its full sequence is Ketol-acid reductoisomerase (NADP(+)) (326 aa).

Residues 1–180 (MDIIHDNAAD…GLTRGGVLEC (180 aa)) form the KARI N-terminal Rossmann domain. NADP(+) contacts are provided by residues 24 to 27 (YGAQ), arginine 47, and serine 51. Histidine 106 is a catalytic residue. Glycine 132 serves as a coordination point for NADP(+). The region spanning 181–326 (TMAQETYEDL…AKIRSLFERN (146 aa)) is the KARI C-terminal knotted domain. 4 residues coordinate Mg(2+): aspartate 189, glutamate 193, glutamate 225, and glutamate 229. A substrate-binding site is contributed by serine 250.

It belongs to the ketol-acid reductoisomerase family. The cofactor is Mg(2+).

It carries out the reaction (2R)-2,3-dihydroxy-3-methylbutanoate + NADP(+) = (2S)-2-acetolactate + NADPH + H(+). It catalyses the reaction (2R,3R)-2,3-dihydroxy-3-methylpentanoate + NADP(+) = (S)-2-ethyl-2-hydroxy-3-oxobutanoate + NADPH + H(+). The protein operates within amino-acid biosynthesis; L-isoleucine biosynthesis; L-isoleucine from 2-oxobutanoate: step 2/4. Its pathway is amino-acid biosynthesis; L-valine biosynthesis; L-valine from pyruvate: step 2/4. Involved in the biosynthesis of branched-chain amino acids (BCAA). Catalyzes an alkyl-migration followed by a ketol-acid reduction of (S)-2-acetolactate (S2AL) to yield (R)-2,3-dihydroxy-isovalerate. In the isomerase reaction, S2AL is rearranged via a Mg-dependent methyl migration to produce 3-hydroxy-3-methyl-2-ketobutyrate (HMKB). In the reductase reaction, this 2-ketoacid undergoes a metal-dependent reduction by NADPH to yield (R)-2,3-dihydroxy-isovalerate. The chain is Ketol-acid reductoisomerase (NADP(+)) from Akkermansia muciniphila (strain ATCC BAA-835 / DSM 22959 / JCM 33894 / BCRC 81048 / CCUG 64013 / CIP 107961 / Muc).